A 29-amino-acid chain; its full sequence is Varv peptide A (29 aa).

Positions 1–29 (GLPVCGETCVGGTCNTPGCSCSWPVCTRN) form a cross-link, cyclopeptide (Gly-Asn). Cystine bridges form between C5/C19, C9/C21, and C14/C26.

In terms of processing, this is a cyclic peptide.

Probably participates in a plant defense mechanism. Has cytotoxic activity against a variety of drug-resistant and drug-sensitive human tumor cell lines, and against primary chronic lymphocytic leukemia cells. Has weak cytotoxic activity against primary ovarian carcinoma cells or normal lymphocytes. This Viola arvensis (European field pansy) protein is Varv peptide A.